Reading from the N-terminus, the 497-residue chain is Probable malate:quinone oxidoreductase (497 aa).

This sequence belongs to the MQO family. The cofactor is FAD.

The enzyme catalyses (S)-malate + a quinone = a quinol + oxaloacetate. It functions in the pathway carbohydrate metabolism; tricarboxylic acid cycle; oxaloacetate from (S)-malate (quinone route): step 1/1. This chain is Probable malate:quinone oxidoreductase, found in Exiguobacterium sibiricum (strain DSM 17290 / CCUG 55495 / CIP 109462 / JCM 13490 / 255-15).